Consider the following 300-residue polypeptide: MSYRELIAELAREHAEEFSDALLELGALSVSVEDADADTPDEQPLFGEPGLTPDRTAWQRSRVIALLAPEHEPAVLLTAAANEIGLEAAPSFTVREVEEQDWVRLTQSQFDPIKIGERIWVVPSWHDAPDPEALVLELDPGLAFGTGSHPTTRLCMEWLEQSVQPGQSVLDYGCGSGILAILAKKCGADPVYGIDIDPQAVESARHNSERNRAEVTYGLPDACPTGEFDIVVANILSNPLKLMASMLSSKVKPGGRIALSGILARQADEVAQVYARWIDISVWREHEGWVCLSGTRRESH.

S-adenosyl-L-methionine-binding residues include Thr152, Gly173, Asp195, and Asn234.

Belongs to the methyltransferase superfamily. PrmA family.

The protein resides in the cytoplasm. The enzyme catalyses L-lysyl-[protein] + 3 S-adenosyl-L-methionine = N(6),N(6),N(6)-trimethyl-L-lysyl-[protein] + 3 S-adenosyl-L-homocysteine + 3 H(+). Methylates ribosomal protein L11. This chain is Ribosomal protein L11 methyltransferase, found in Paraburkholderia xenovorans (strain LB400).